A 514-amino-acid polypeptide reads, in one-letter code: Leucine-rich repeat-containing protein 14B (514 aa).

An LRR 1; degenerate repeat occupies 104–141 (RRRLRVADLTGIRDVQVQRCPCGRALGRWGRTQLLART). The stretch at 185–209 (RVHCPSFRADSLSPSQLLHVLRLAG) is one LRR 2; degenerate repeat. An LRR 4; degenerate repeat occupies 238 to 277 (FPRLASLTLPTKAFDAPPTYASTPDGEDPLLASIARELSK). LRR repeat units follow at residues 278–302 (MAQL…LGPL), 303–334 (QTPL…AHLE), 335–350 (VLDL…YPST), 359–386 (SRTL…GLSP), and 387–411 (CHRL…LFTA).

The protein belongs to the PRAME family. LRRC14 subfamily.

The sequence is that of Leucine-rich repeat-containing protein 14B from Homo sapiens (Human).